A 286-amino-acid chain; its full sequence is Protein GrpE (286 aa).

Disordered stretches follow at residues Met1–Ala51 and Val260–Thr286. Low complexity-rich tracts occupy residues Gln39 to Thr50 and Thr271 to Thr286.

The protein belongs to the GrpE family. In terms of assembly, homodimer.

It localises to the cytoplasm. In terms of biological role, participates actively in the response to hyperosmotic and heat shock by preventing the aggregation of stress-denatured proteins, in association with DnaK and GrpE. It is the nucleotide exchange factor for DnaK and may function as a thermosensor. Unfolded proteins bind initially to DnaJ; upon interaction with the DnaJ-bound protein, DnaK hydrolyzes its bound ATP, resulting in the formation of a stable complex. GrpE releases ADP from DnaK; ATP binding to DnaK triggers the release of the substrate protein, thus completing the reaction cycle. Several rounds of ATP-dependent interactions between DnaJ, DnaK and GrpE are required for fully efficient folding. This is Protein GrpE from Gloeothece citriformis (strain PCC 7424) (Cyanothece sp. (strain PCC 7424)).